The following is a 322-amino-acid chain: Probable heme-iron transport system permease protein IsdF (322 aa).

Transmembrane regions (helical) follow at residues 9–29 (LLFLCLLVILIATAYISFVTG), 61–81 (ILIALMVGAMLAVSGALLQAA), 89–109 (ANIIGVSSGALIMRALCMLFI), 114–134 (FYLPLLSFIGGLIPFLIIILL), 143–163 (VSMILVGVALFVLLNGVLEIL), 179–199 (IWSDVYILAVSALLGLILTLL), 233–253 (VFLASATVAIVGQLAFLGIIV), 267–287 (VLIPFSTVIGAWLLLVADLLG), and 294–314 (LEIPANAILMIVGGPMLIYLI).

Belongs to the binding-protein-dependent transport system permease family. FecCD subfamily.

The protein localises to the cell membrane. Part of the binding-protein-dependent transport system for heme-iron. Responsible for the translocation of the substrate across the membrane. The protein is Probable heme-iron transport system permease protein IsdF (isdF) of Staphylococcus aureus (strain Mu3 / ATCC 700698).